A 483-amino-acid chain; its full sequence is V-type proton ATPase subunit H (483 aa).

Serine 483 is subject to Phosphoserine.

It belongs to the V-ATPase H subunit family. As to quaternary structure, V-ATPase is a heteromultimeric enzyme made up of two complexes: the ATP-hydrolytic V1 complex and the proton translocation V0 complex. The V1 complex consists of three catalytic AB heterodimers that form a heterohexamer, three peripheral stalks each consisting of EG heterodimers, one central rotor including subunits D and F, and the regulatory subunits C and H. The proton translocation complex V0 consists of the proton transport subunit a, a ring of proteolipid subunits c9c'', rotary subunit d, subunits e and f, and the accessory subunits ATP6AP1/Ac45 and ATP6AP2/PRR. Interacts with AP2M1. Interacts with TM9SF4 in colon cancer cells. (Microbial infection) Interacts with HIV-1 Nef protein. In terms of assembly, (Microbial infection) Interacts with M.tuberculosis PtpA, which blocks V-ATPase trafficking and phagosome acidification. Widely expressed.

Its subcellular location is the cytoplasmic vesicle. It is found in the clathrin-coated vesicle membrane. Its function is as follows. Subunit of the V1 complex of vacuolar(H+)-ATPase (V-ATPase), a multisubunit enzyme composed of a peripheral complex (V1) that hydrolyzes ATP and a membrane integral complex (V0) that translocates protons. V-ATPase is responsible for acidifying and maintaining the pH of intracellular compartments and in some cell types, is targeted to the plasma membrane, where it is responsible for acidifying the extracellular environment. Subunit H is essential for V-ATPase activity, but not for the assembly of the complex. Involved in the endocytosis mediated by clathrin-coated pits, required for the formation of endosomes. In Homo sapiens (Human), this protein is V-type proton ATPase subunit H (ATP6V1H).